The sequence spans 355 residues: GTPase Obg (355 aa).

Positions 1-159 (MKFLDEAKVY…KTIWLRLKLI (159 aa)) constitute an Obg domain. In terms of domain architecture, OBG-type G spans 160 to 327 (ADAGLVGLPN…ALRALRDIIV (168 aa)). GTP is bound by residues 166-173 (GLPNAGKS), 191-195 (FTTLH), 212-215 (DIPG), 279-282 (SQID), and 308-310 (SAA). 2 residues coordinate Mg(2+): Ser-173 and Thr-193. The disordered stretch occupies residues 333–355 (GDTALPDRSMPHESEVEEEDDRL).

The protein belongs to the TRAFAC class OBG-HflX-like GTPase superfamily. OBG GTPase family. Monomer. Mg(2+) serves as cofactor.

It is found in the cytoplasm. In terms of biological role, an essential GTPase which binds GTP, GDP and possibly (p)ppGpp with moderate affinity, with high nucleotide exchange rates and a fairly low GTP hydrolysis rate. Plays a role in control of the cell cycle, stress response, ribosome biogenesis and in those bacteria that undergo differentiation, in morphogenesis control. In Agrobacterium fabrum (strain C58 / ATCC 33970) (Agrobacterium tumefaciens (strain C58)), this protein is GTPase Obg.